Reading from the N-terminus, the 209-residue chain is Peptide deformylase 2 (209 aa).

The Fe cation site is built by Cys101 and His149. The active site involves Glu150. His153 is a binding site for Fe cation.

This sequence belongs to the polypeptide deformylase family. Fe(2+) serves as cofactor.

The catalysed reaction is N-terminal N-formyl-L-methionyl-[peptide] + H2O = N-terminal L-methionyl-[peptide] + formate. In terms of biological role, removes the formyl group from the N-terminal Met of newly synthesized proteins. Requires at least a dipeptide for an efficient rate of reaction. N-terminal L-methionine is a prerequisite for activity but the enzyme has broad specificity at other positions. The sequence is that of Peptide deformylase 2 from Coxiella burnetii (strain RSA 493 / Nine Mile phase I).